Here is a 545-residue protein sequence, read N- to C-terminus: MLARTAAIRSLSRTLINSTKAARPAAAALASTRRLASTKAQPTEVSSILEERIKGVSDEANLNETGRVLAVGDGIARVFGLNNIQAEELVEFSSGVKGMALNLEPGQVGIVLFGSDRLVKEGELVKRTGNIVDVPVGPGLLGRVVDALGNPIDGKGPIDAAGRSRAQVKAPGILPRRSVHEPVQTGLKAVDALVPIGRGQRELIIGDRQTGKTAVALDTILNQKRWNNGSDESKKLYCVYVAVGQKRSTVAQLVQTLEQHDAMKYSIIVAATASEAAPLQYLAPFTAASIGEWFRDNGKHALIVYDDLSKQAVAYRQLSLLLRRPPGREAYPGDVFYLHSRLLERAAKLSEKEGSGSLTALPVIETQGGDVSAYIPTNVISITDGQIFLEAELFYKGIRPAINVGLSVSRVGSAAQVKALKQVAGSLKLFLAQYREVAAFAQFGSDLDASTKQTLVRGERLTQLLKQNQYSPLATEEQVPLIYAGVNGHLDGIELSRIGEFESSFLSYLKSNHNELLTEIREKGELSKELLASLKSATESFVATF.

The transit peptide at 1 to 35 (MLARTAAIRSLSRTLINSTKAARPAAAALASTRRL) directs the protein to the mitochondrion. 2 positions are modified to phosphoserine: serine 57 and serine 178. 206-213 (GDRQTGKT) provides a ligand contact to ATP.

This sequence belongs to the ATPase alpha/beta chains family. As to quaternary structure, F-type ATPases have 2 components, CF(1) - the catalytic core - and CF(0) - the membrane proton channel. CF(1) has five subunits: alpha(3), beta(3), gamma(1), delta(1), epsilon(1). CF(0) has three main subunits: a, b and c.

It is found in the mitochondrion inner membrane. Its function is as follows. Mitochondrial membrane ATP synthase (F(1)F(0) ATP synthase or Complex V) produces ATP from ADP in the presence of a proton gradient across the membrane which is generated by electron transport complexes of the respiratory chain. F-type ATPases consist of two structural domains, F(1) - containing the extramembraneous catalytic core, and F(0) - containing the membrane proton channel, linked together by a central stalk and a peripheral stalk. During catalysis, ATP synthesis in the catalytic domain of F(1) is coupled via a rotary mechanism of the central stalk subunits to proton translocation. Subunits alpha and beta form the catalytic core in F(1). Rotation of the central stalk against the surrounding alpha(3)beta(3) subunits leads to hydrolysis of ATP in three separate catalytic sites on the beta subunits. Subunit alpha does not bear the catalytic high-affinity ATP-binding sites. In Saccharomyces cerevisiae (strain ATCC 204508 / S288c) (Baker's yeast), this protein is ATP synthase subunit alpha, mitochondrial (ATP1).